The sequence spans 534 residues: NAD(P)H-quinone oxidoreductase chain 4 2 (534 aa).

The next 13 membrane-spanning stretches (helical) occupy residues 6-26, 38-58, 93-113, 117-137, 138-158, 171-191, 210-230, 245-265, 279-299, 313-333, 335-355, 377-399, and 419-439; these read FPWLTTIILLPIVAALFIPLL, WYSLIVGLVDFILLVVAFWTS, LILLTGFISTLAMLAAWPVTF, FFYFLMLAMYGGQILVFAVQD, LLVFFFAWELELIPVYLLLAI, FILYTAGSSLFILVASLAMAF, IGFQLLLYAGFLIAYGVKLPI, TAPVHMLLAGILLKMGGYALF, FAPILVLLGVVNILYAALTSF, ISHMGFVLIGLGSFTQLGLSG, MLQMVSHGLIGASLFFLVGAT, MFAMWTTCAMASLALPGMSGFVA, and VVVISLAAIGVILTPIYLLSM.

The protein belongs to the complex I subunit 4 family.

It is found in the cellular thylakoid membrane. The catalysed reaction is a plastoquinone + NADH + (n+1) H(+)(in) = a plastoquinol + NAD(+) + n H(+)(out). It carries out the reaction a plastoquinone + NADPH + (n+1) H(+)(in) = a plastoquinol + NADP(+) + n H(+)(out). In terms of biological role, NDH-1 shuttles electrons from NAD(P)H, via FMN and iron-sulfur (Fe-S) centers, to quinones in the respiratory chain. The immediate electron acceptor for the enzyme in this species is believed to be plastoquinone. Couples the redox reaction to proton translocation (for every two electrons transferred, four hydrogen ions are translocated across the cytoplasmic membrane), and thus conserves the redox energy in a proton gradient. The polypeptide is NAD(P)H-quinone oxidoreductase chain 4 2 (Synechococcus elongatus (strain ATCC 33912 / PCC 7942 / FACHB-805) (Anacystis nidulans R2)).